We begin with the raw amino-acid sequence, 388 residues long: P2X receptor E (388 aa).

Topologically, residues 1-28 (MNFRNIDWDSLFSYSTIKIVRIRDKRLG) are cytoplasmic. The chain crosses the membrane as a helical span at residues 29–49 (ILHFAFLIGIILYIIVGTIFL). Residues 50–312 (QKKYLVLESP…QLGQFDFQTM (263 aa)) are Lumenal-facing. A pore-forming motif region spans residues 291 to 304 (RHGVRIIFIQTGQL). The chain crosses the membrane as a helical span at residues 313 to 333 (LLTFVSGIGLVTAASLIVDII). The Cytoplasmic portion of the chain corresponds to 334–388 (ATRIMPQRSRYQELKFQDSSINNTQKTPTNDHTPLLKDNEDTINENSYQNNSYEK). The tract at residues 349 to 388 (FQDSSINNTQKTPTNDHTPLLKDNEDTINENSYQNNSYEK) is disordered. Polar residues-rich tracts occupy residues 350-365 (QDSS…TNDH) and 377-388 (NENSYQNNSYEK).

This sequence belongs to the P2X receptor family.

The protein resides in the contractile vacuole membrane. Functionally, P2X receptors are ATP-gated ion channels that play a role in intracellular calcium signaling. Not required for the purinergic response to extracellular nucleotides. Not essential for osmoregulation. Inward currents evoked by intracellular ATP. ATP analog beta, gamma-imido-ATP is a weak partial agonist of p2xE. Exclusively selective for ATP over other nucleotides. Insensitive to copper and P2 receptor antagonists PPADS and suramin but strongly inhibited by sodium ions. More permeable to ammonium than either sodium or potassium ions and less permeable to choline. Permeable to calcium ions, but not chloride. The chain is P2X receptor E (p2xE) from Dictyostelium discoideum (Social amoeba).